The following is a 288-amino-acid chain: Acetyl-coenzyme A carboxylase carboxyl transferase subunit beta (288 aa).

The region spanning 32–288 is the CoA carboxyltransferase N-terminal domain; it reads LFAKCPACKH…LELHTEVENV (257 aa). 4 residues coordinate Zn(2+): Cys-36, Cys-39, Cys-54, and Cys-57. The C4-type zinc-finger motif lies at 36 to 57; the sequence is CPACKHTIYQKDLGKNKVCPNC.

This sequence belongs to the AccD/PCCB family. As to quaternary structure, acetyl-CoA carboxylase is a heterohexamer composed of biotin carboxyl carrier protein (AccB), biotin carboxylase (AccC) and two subunits each of ACCase subunit alpha (AccA) and ACCase subunit beta (AccD). Requires Zn(2+) as cofactor.

Its subcellular location is the cytoplasm. The catalysed reaction is N(6)-carboxybiotinyl-L-lysyl-[protein] + acetyl-CoA = N(6)-biotinyl-L-lysyl-[protein] + malonyl-CoA. It functions in the pathway lipid metabolism; malonyl-CoA biosynthesis; malonyl-CoA from acetyl-CoA: step 1/1. Component of the acetyl coenzyme A carboxylase (ACC) complex. Biotin carboxylase (BC) catalyzes the carboxylation of biotin on its carrier protein (BCCP) and then the CO(2) group is transferred by the transcarboxylase to acetyl-CoA to form malonyl-CoA. This is Acetyl-coenzyme A carboxylase carboxyl transferase subunit beta from Lactococcus lactis subsp. cremoris (strain SK11).